We begin with the raw amino-acid sequence, 147 residues long: Large-conductance mechanosensitive channel (147 aa).

Transmembrane regions (helical) follow at residues 14–34 and 85–105; these read VVDM…VKSL and FGLF…LFMI.

The protein belongs to the MscL family. As to quaternary structure, homopentamer.

The protein resides in the cell inner membrane. Functionally, channel that opens in response to stretch forces in the membrane lipid bilayer. May participate in the regulation of osmotic pressure changes within the cell. This is Large-conductance mechanosensitive channel from Tolumonas auensis (strain DSM 9187 / NBRC 110442 / TA 4).